The following is a 541-amino-acid chain: Arginine--tRNA ligase (541 aa).

The 'HIGH' region signature appears at 119–129 (ANPTGPLHIGH).

The protein belongs to the class-I aminoacyl-tRNA synthetase family. In terms of assembly, monomer.

The protein localises to the cytoplasm. It catalyses the reaction tRNA(Arg) + L-arginine + ATP = L-arginyl-tRNA(Arg) + AMP + diphosphate. This chain is Arginine--tRNA ligase, found in Helicobacter acinonychis (strain Sheeba).